The primary structure comprises 689 residues: Calcium-responsive transcription factor (689 aa).

2 disordered regions span residues 1 to 46 (MEQR…PTIL) and 541 to 609 (SPDG…SVPN). A compositionally biased stretch (basic and acidic residues) spans 13–29 (DGEKSEREAQGFEHRTC). Composition is skewed to polar residues over residues 541–559 (SPDGSQALVSVDSHASSSP) and 578–601 (LGQSQNPGTDTCLTQDNSTSSSTG).

Highly expressed in brain and testis.

Its subcellular location is the nucleus. Acts as a transcriptional activator that mediates the calcium- and neuron-selective induction of BDNF exon III transcription. Binds to the consensus calcium-response element CaRE1 5'-CTATTTCGAG-3' sequence. In Mus musculus (Mouse), this protein is Calcium-responsive transcription factor (Carf).